A 111-amino-acid polypeptide reads, in one-letter code: Sulditoxin subunit B (111 aa).

The N-terminal stretch at 1–19 (MKTLLLALAVVVLVCLGSA) is a signal peptide. Positions 20 to 34 (NELGLGRQQIDRGRR) are excised as a propeptide. Glutamine 35 is modified (pyrrolidone carboxylic acid). 5 disulfide bridges follow: cysteine 44–cysteine 68, cysteine 47–cysteine 55, cysteine 61–cysteine 87, cysteine 91–cysteine 102, and cysteine 103–cysteine 108.

Belongs to the three-finger toxin family. Ancestral subfamily. Boigatoxin sub-subfamily. In terms of assembly, heterodimer of sulditoxin subunits A and B; probably disulfide-linked. In terms of tissue distribution, expressed by the venom gland.

The protein resides in the secreted. Reptile-specific neurotoxin (tested on geckos). Inhibits nicotinic acetylcholine receptor (nAChR). Not toxic to mammals (tested on mice). This Spilotes sulphureus (Amazon puffing snake) protein is Sulditoxin subunit B.